The sequence spans 179 residues: MVMIMRICIQPVGDVNDEILKFLKKKFGEVFGMCEILPKIDIPIYAYNFSRGQFNSTLILKSLPTVEDIVLGVTEVDIYADNLNFVFGEAELFGKRALISLARLRPEFYGLPPNKDVLKIRALKEAIHEIGHVLGLIHCENKRCVMSFSNSIIDVDLKDWRYCKKCLKKLQDRGIYISI.

A Zn(2+)-binding site is contributed by His128. Glu129 functions as the Proton acceptor in the catalytic mechanism. Residues His132, His138, Cys139, Cys144, Cys163, and Cys166 each contribute to the Zn(2+) site.

The protein belongs to the peptidase M54 family. Monomer. It depends on Zn(2+) as a cofactor.

In terms of biological role, probable zinc metalloprotease whose natural substrate is unknown. The polypeptide is Archaemetzincin (Methanocaldococcus jannaschii (strain ATCC 43067 / DSM 2661 / JAL-1 / JCM 10045 / NBRC 100440) (Methanococcus jannaschii)).